The following is a 201-amino-acid chain: Imidazole glycerol phosphate synthase subunit HisH 1 (201 aa).

Residues 1 to 201 (MIALIDYKAG…LKLLENFARL (201 aa)) form the Glutamine amidotransferase type-1 domain. The Nucleophile role is filled by Cys-80. Active-site residues include His-183 and Glu-185.

As to quaternary structure, heterodimer of HisH and HisF.

Its subcellular location is the cytoplasm. It catalyses the reaction 5-[(5-phospho-1-deoxy-D-ribulos-1-ylimino)methylamino]-1-(5-phospho-beta-D-ribosyl)imidazole-4-carboxamide + L-glutamine = D-erythro-1-(imidazol-4-yl)glycerol 3-phosphate + 5-amino-1-(5-phospho-beta-D-ribosyl)imidazole-4-carboxamide + L-glutamate + H(+). The enzyme catalyses L-glutamine + H2O = L-glutamate + NH4(+). It participates in amino-acid biosynthesis; L-histidine biosynthesis; L-histidine from 5-phospho-alpha-D-ribose 1-diphosphate: step 5/9. In terms of biological role, IGPS catalyzes the conversion of PRFAR and glutamine to IGP, AICAR and glutamate. The HisH subunit provides the glutamine amidotransferase activity that produces the ammonia necessary to HisF for the synthesis of IGP and AICAR. The protein is Imidazole glycerol phosphate synthase subunit HisH 1 (hisH1) of Campylobacter jejuni subsp. jejuni serotype O:23/36 (strain 81-176).